We begin with the raw amino-acid sequence, 101 residues long: Urease subunit beta (101 aa).

The protein belongs to the urease beta subunit family. Heterotrimer of UreA (gamma), UreB (beta) and UreC (alpha) subunits. Three heterotrimers associate to form the active enzyme.

It localises to the cytoplasm. It carries out the reaction urea + 2 H2O + H(+) = hydrogencarbonate + 2 NH4(+). It functions in the pathway nitrogen metabolism; urea degradation; CO(2) and NH(3) from urea (urease route): step 1/1. In Ralstonia pickettii (strain 12J), this protein is Urease subunit beta.